The sequence spans 150 residues: uncharacterized protein (150 aa).

Over residues 1 to 19 (MNDDSSSSSSGDSSDGSSG) the composition is skewed to low complexity. Disordered stretches follow at residues 1–21 (MNDD…SGTT) and 85–131 (EPEA…AYPE). Positions 106–115 (RPPPTEPPTV) are enriched in pro residues.

This is an uncharacterized protein from Schizosaccharomyces pombe (strain 972 / ATCC 24843) (Fission yeast).